A 464-amino-acid polypeptide reads, in one-letter code: Transcription factor EAT1 (464 aa).

The segment at 261-274 is basic motif; degenerate; the sequence is GKGKANFATERERR. Residues 261-310 enclose the bHLH domain; the sequence is GKGKANFATERERREQLNVKFRTLRMLFPNPTKNDRASIVGDAIEYIDEL. Positions 275–310 are helix-loop-helix motif; sequence EQLNVKFRTLRMLFPNPTKNDRASIVGDAIEYIDEL. The tract at residues 338–357 is disordered; it reads QEAAADGESSSMRPVRDDQD.

It belongs to the bHLH protein family. Interacts with TDR.

The protein localises to the nucleus. Functionally, transcription factor involved in the regulation of tapetum programmed cell death (PCD) and degradation during male reproductive development. Interacts with TDR and promote tapetal PCD by regulating the expression of RTS, and the two lipid-transfer proteins C4 and C6, which function in microspore development. Acts downstream from and interacts with TDR in the regulation of tapetal PCD. Regulates directly the aspartic protease AP25 and AP37 during tapetal PCD. May not target the cysteine protease CP1. The protein is Transcription factor EAT1 of Oryza sativa subsp. japonica (Rice).